We begin with the raw amino-acid sequence, 445 residues long: 3-phosphoshikimate 1-carboxyvinyltransferase (445 aa).

The segment at 1–25 is disordered; it reads MSGHGPAQPMTARRSGPLKGRAEIP. Residues Lys28, Ser29, and Arg33 each contribute to the 3-phosphoshikimate site. Lys28 lines the phosphoenolpyruvate pocket. Positions 101 and 129 each coordinate phosphoenolpyruvate. Residues Ser174, Gln176, Asp326, and Lys353 each contribute to the 3-phosphoshikimate site. Residue Gln176 coordinates phosphoenolpyruvate. Asp326 functions as the Proton acceptor in the catalytic mechanism. Residues Arg357 and Arg400 each contribute to the phosphoenolpyruvate site.

It belongs to the EPSP synthase family. Monomer.

It is found in the cytoplasm. It carries out the reaction 3-phosphoshikimate + phosphoenolpyruvate = 5-O-(1-carboxyvinyl)-3-phosphoshikimate + phosphate. It functions in the pathway metabolic intermediate biosynthesis; chorismate biosynthesis; chorismate from D-erythrose 4-phosphate and phosphoenolpyruvate: step 6/7. Catalyzes the transfer of the enolpyruvyl moiety of phosphoenolpyruvate (PEP) to the 5-hydroxyl of shikimate-3-phosphate (S3P) to produce enolpyruvyl shikimate-3-phosphate and inorganic phosphate. The polypeptide is 3-phosphoshikimate 1-carboxyvinyltransferase (Cereibacter sphaeroides (strain ATCC 17029 / ATH 2.4.9) (Rhodobacter sphaeroides)).